The primary structure comprises 277 residues: Phosphatidylserine decarboxylase proenzyme (277 aa).

Catalysis depends on charge relay system; for autoendoproteolytic cleavage activity residues aspartate 88, histidine 144, and serine 242. Serine 242 serves as the catalytic Schiff-base intermediate with substrate; via pyruvic acid; for decarboxylase activity. Serine 242 carries the post-translational modification Pyruvic acid (Ser); by autocatalysis.

The protein belongs to the phosphatidylserine decarboxylase family. PSD-B subfamily. Prokaryotic type I sub-subfamily. As to quaternary structure, heterodimer of a large membrane-associated beta subunit and a small pyruvoyl-containing alpha subunit. It depends on pyruvate as a cofactor. Is synthesized initially as an inactive proenzyme. Formation of the active enzyme involves a self-maturation process in which the active site pyruvoyl group is generated from an internal serine residue via an autocatalytic post-translational modification. Two non-identical subunits are generated from the proenzyme in this reaction, and the pyruvate is formed at the N-terminus of the alpha chain, which is derived from the carboxyl end of the proenzyme. The autoendoproteolytic cleavage occurs by a canonical serine protease mechanism, in which the side chain hydroxyl group of the serine supplies its oxygen atom to form the C-terminus of the beta chain, while the remainder of the serine residue undergoes an oxidative deamination to produce ammonia and the pyruvoyl prosthetic group on the alpha chain. During this reaction, the Ser that is part of the protease active site of the proenzyme becomes the pyruvoyl prosthetic group, which constitutes an essential element of the active site of the mature decarboxylase.

The protein resides in the cell membrane. The enzyme catalyses a 1,2-diacyl-sn-glycero-3-phospho-L-serine + H(+) = a 1,2-diacyl-sn-glycero-3-phosphoethanolamine + CO2. It participates in phospholipid metabolism; phosphatidylethanolamine biosynthesis; phosphatidylethanolamine from CDP-diacylglycerol: step 2/2. Catalyzes the formation of phosphatidylethanolamine (PtdEtn) from phosphatidylserine (PtdSer). In Psychrobacter arcticus (strain DSM 17307 / VKM B-2377 / 273-4), this protein is Phosphatidylserine decarboxylase proenzyme.